We begin with the raw amino-acid sequence, 101 residues long: Large ribosomal subunit protein uL24 (101 aa).

This sequence belongs to the universal ribosomal protein uL24 family. In terms of assembly, part of the 50S ribosomal subunit.

Functionally, one of two assembly initiator proteins, it binds directly to the 5'-end of the 23S rRNA, where it nucleates assembly of the 50S subunit. Its function is as follows. One of the proteins that surrounds the polypeptide exit tunnel on the outside of the subunit. The protein is Large ribosomal subunit protein uL24 of Streptococcus uberis (strain ATCC BAA-854 / 0140J).